The following is a 157-amino-acid chain: Probable succinate transporter subunit YjjB (157 aa).

4 helical membrane passes run 10–30, 55–75, 87–107, and 129–149; these read LAQD…VFNV, AGFN…SIGI, IFTV…TAMI, and FLKA…PGLW.

The protein belongs to the ThrE exporter (TC 2.A.79) family. In terms of assembly, the transporter is composed of YjjB and YjjP.

Its subcellular location is the cell inner membrane. Involved in succinate export with YjjP. Both proteins are required for export. Participates in succinate export, but also in the export of other dicarboxylates, such as fumarate and malate. Contributes to succinate production under both aerobic and anaerobic conditions, and increases fumarate and malate production during anaerobic succinate production. The chain is Probable succinate transporter subunit YjjB from Klebsiella aerogenes (strain ATCC 13048 / DSM 30053 / CCUG 1429 / JCM 1235 / KCTC 2190 / NBRC 13534 / NCIMB 10102 / NCTC 10006 / CDC 819-56) (Enterobacter aerogenes).